We begin with the raw amino-acid sequence, 218 residues long: Probable signal peptidase I-2 (218 aa).

The Cytoplasmic segment spans residues 1-26 (MTENIVRETSKKKESPPENTWLELGK). The chain crosses the membrane as a helical span at residues 27 to 43 (TMVTAVILAIGIRTFVA). The Periplasmic segment spans residues 44-218 (EARYIPSSSM…ISPQTVPESR (175 aa)). Active-site residues include S52 and K100.

Belongs to the peptidase S26 family.

It is found in the cell membrane. It catalyses the reaction Cleavage of hydrophobic, N-terminal signal or leader sequences from secreted and periplasmic proteins.. The chain is Probable signal peptidase I-2 (lepB2) from Synechocystis sp. (strain ATCC 27184 / PCC 6803 / Kazusa).